Consider the following 569-residue polypeptide: Proline--tRNA ligase (569 aa).

This sequence belongs to the class-II aminoacyl-tRNA synthetase family. ProS type 1 subfamily. In terms of assembly, homodimer.

It localises to the cytoplasm. It catalyses the reaction tRNA(Pro) + L-proline + ATP = L-prolyl-tRNA(Pro) + AMP + diphosphate. Its function is as follows. Catalyzes the attachment of proline to tRNA(Pro) in a two-step reaction: proline is first activated by ATP to form Pro-AMP and then transferred to the acceptor end of tRNA(Pro). As ProRS can inadvertently accommodate and process non-cognate amino acids such as alanine and cysteine, to avoid such errors it has two additional distinct editing activities against alanine. One activity is designated as 'pretransfer' editing and involves the tRNA(Pro)-independent hydrolysis of activated Ala-AMP. The other activity is designated 'posttransfer' editing and involves deacylation of mischarged Ala-tRNA(Pro). The misacylated Cys-tRNA(Pro) is not edited by ProRS. This chain is Proline--tRNA ligase, found in Halalkalibacterium halodurans (strain ATCC BAA-125 / DSM 18197 / FERM 7344 / JCM 9153 / C-125) (Bacillus halodurans).